The sequence spans 183 residues: Threonylcarbamoyl-AMP synthase (183 aa).

The YrdC-like domain maps to 1–183 (MNREQIANAL…LRTNQLFRQG (183 aa)).

This sequence belongs to the SUA5 family. TsaC subfamily.

The protein localises to the cytoplasm. It catalyses the reaction L-threonine + hydrogencarbonate + ATP = L-threonylcarbamoyladenylate + diphosphate + H2O. Required for the formation of a threonylcarbamoyl group on adenosine at position 37 (t(6)A37) in tRNAs that read codons beginning with adenine. Catalyzes the conversion of L-threonine, HCO(3)(-)/CO(2) and ATP to give threonylcarbamoyl-AMP (TC-AMP) as the acyladenylate intermediate, with the release of diphosphate. The protein is Threonylcarbamoyl-AMP synthase of Haemophilus influenzae (strain PittEE).